The following is a 508-amino-acid chain: Cytochrome P450 monooxygenase aflV (508 aa).

Residues 18–38 (LTWWFLAVGGAWIVSKIIKIL) traverse the membrane as a helical segment. 4 N-linked (GlcNAc...) asparagine glycosylation sites follow: Asn192, Asn209, Asn302, and Asn408. Position 453 (Cys453) interacts with heme.

It belongs to the cytochrome P450 family. Heme is required as a cofactor.

Its subcellular location is the membrane. Its pathway is mycotoxin biosynthesis; aflatoxin biosynthesis. Its function is as follows. Cytochrome P450 monooxygenase; part of the gene cluster that mediates the biosynthesis of aflatoxins, a group of polyketide-derived furanocoumarins, and part of the most toxic and carcinogenic compounds among the known mycotoxins. The four major aflatoxins produced by A.parasiticus are aflatoxin B1 (AFB1), aflatoxin B2 (AFB2), aflatoxin G1 (AFG1) and aflatoxin G2 (AFG2). The role of the cytochrome P450 monooxygenase aflV in aflatoxin biosynthesis has still to be characterized. The biosynthesis of aflatoxins begins with the norsolorinic acid synthase aflC that combines a hexanoyl starter unit produced by the fatty acid synthase aflA/aflB and 7 malonyl-CoA extender units to synthesize the precursor NOR. The second step is the conversion of NOR to averantin and requires the norsolorinic acid ketoreductase aflD, which catalyzes the dehydration of norsolorinic acid to form (1'S)-averantin. The norsolorinic acid reductases aflE and aflF may also play a role in the conversion of NOR to AVN. The cytochrome P450 monooxygenase aflG then catalyzes the hydroxylation of AVN to 5'hydroxyaverantin (HAVN). The next step is performed by the 5'-hydroxyaverantin dehydrogenase aflH that transforms HAVN to 5'-oxoaverantin (OAVN) which is further converted to averufin (AVF) by aflK that plays a dual role in the pathway, as a 5'-oxoaverantin cyclase that mediates conversion of 5'-oxoaverantin, as well as a versicolorin B synthase in a later step in the pathway. The averufin oxidase aflI catalyzes the conversion of AVF to versiconal hemiacetal acetate (VHA). VHA is then the substrate for the versiconal hemiacetal acetate esterase aflJ to yield versiconal (VAL). Versicolorin B synthase aflK then converts VAL to versicolorin B (VERB) by closing the bisfuran ring of aflatoxin which is required for DNA-binding, thus giving to aflatoxin its activity as a mutagen. Then, the activity of the versicolorin B desaturase aflL leads to versicolorin A (VERA). A branch point starts from VERB since it can also be converted to dihydrodemethylsterigmatocystin (DMDHST), probably also by aflL, VERA being a precursor for aflatoxins B1 and G1, and DMDHST for aflatoxins B2 and G2. Next, the versicolorin reductase aflM and the cytochrome P450 monooxygenase aflN are involved in conversion of VERA to demethylsterigmatocystin (DMST). AflX and aflY seem also involved in this step, through probable aflX-mediated epoxide ring-opening step following versicolorin A oxidation and aflY-mediated Baeyer-Villiger oxidation required for the formation of the xanthone ring. The methyltransferase aflO then leads to the modification of DMST to sterigmatocystin (ST), and of DMDHST to dihydrosterigmatocystin (DHST). Both ST and DHST are then substrates of the O-methyltransferase aflP to yield O-methylsterigmatocystin (OMST) and dihydro-O-methylsterigmatocystin (DHOMST), respectively. Finally OMST is converted to aflatoxins B1 and G1, and DHOMST to aflatoxins B2 and G2, via the action of several enzymes including O-methylsterigmatocystin oxidoreductase aflQ, the cytochrome P450 monooxygenase aflU, but also the NADH-dependent flavin oxidoreductase nadA which is specifically required for the synthesis of AFG1. This is Cytochrome P450 monooxygenase aflV from Aspergillus parasiticus (strain ATCC 56775 / NRRL 5862 / SRRC 143 / SU-1).